The primary structure comprises 192 residues: Thymidylate kinase (192 aa).

7–14 (GVDGVGKS) contributes to the ATP binding site.

It belongs to the thymidylate kinase family.

It carries out the reaction dTMP + ATP = dTDP + ADP. Functionally, phosphorylation of dTMP to form dTDP in both de novo and salvage pathways of dTTP synthesis. The chain is Thymidylate kinase from Campylobacter fetus subsp. fetus (strain 82-40).